A 391-amino-acid chain; its full sequence is Autotransporter heptosyltransferase Aah (391 aa).

Thr-101, Leu-102, and Gly-103 together coordinate ADP-D-glycero-beta-D-manno-heptose. Residue Asp-104 is the Proton acceptor of the active site. Gln-218, Thr-220, Lys-224, Arg-251, Leu-275, Gly-296, and Glu-320 together coordinate ADP-D-glycero-beta-D-manno-heptose. Cys-333, Cys-336, Cys-352, and Cys-364 together coordinate Fe(3+).

This sequence belongs to the glycosyltransferase 9 family. In terms of assembly, homododecamer composed of 6 homodimers forming a ring. Fe(3+) serves as cofactor.

It is found in the cytoplasm. The catalysed reaction is ADP-D-glycero-beta-D-manno-heptose + L-seryl-[protein] = O-(D-glycero-alpha-D-manno-heptosyl)-L-seryl-[protein] + ADP + H(+). The enzyme catalyses ADP-L-glycero-beta-D-manno-heptose + L-seryl-[protein] = O-(L-glycero-alpha-D-manno-heptosyl)-L-seryl-[protein] + ADP + H(+). In terms of biological role, glycosylates autotransporter AIDA-I. Catalyzes the addition of both L, D-heptose and D, D-heptose sugars. Probably by glycosylating AIDA-I, involved in bacteria adhesion to host mammalian cells. This is Autotransporter heptosyltransferase Aah from Escherichia coli.